The sequence spans 447 residues: Argininosuccinate synthase (447 aa).

ATP is bound by residues 17-25 (AFSGGLDTS) and Ala-43. Position 99 (Tyr-99) interacts with L-citrulline. Gly-129 and Thr-131 together coordinate ATP. Thr-131, Asn-135, and Asp-136 together coordinate L-aspartate. Asn-135 is a binding site for L-citrulline. ATP is bound at residue Asp-136. Residues Arg-139 and Ser-192 each coordinate L-citrulline. Asp-194 lines the ATP pocket. 3 residues coordinate L-citrulline: Thr-201, Glu-203, and Glu-280.

The protein belongs to the argininosuccinate synthase family. Type 2 subfamily. As to quaternary structure, homotetramer.

The protein localises to the cytoplasm. The catalysed reaction is L-citrulline + L-aspartate + ATP = 2-(N(omega)-L-arginino)succinate + AMP + diphosphate + H(+). It participates in amino-acid biosynthesis; L-arginine biosynthesis; L-arginine from L-ornithine and carbamoyl phosphate: step 2/3. This is Argininosuccinate synthase from Citrobacter koseri (strain ATCC BAA-895 / CDC 4225-83 / SGSC4696).